A 416-amino-acid polypeptide reads, in one-letter code: Squalene synthase (416 aa).

Residues Arg52 and Arg77 each contribute to the NADP(+) site. Mg(2+) is bound by residues Asp80, Glu83, and Asp84. Arg218 serves as a coordination point for NADP(+). Residues 284 to 304 (SVFNFCAIPQVMAIATLAACY) form a helical membrane-spanning segment. NADP(+) is bound by residues Lys315 and Arg317. A helical membrane pass occupies residues 384–404 (PIYLSFIMLLAALSWQYLSTL).

The protein belongs to the phytoene/squalene synthase family. It depends on Mg(2+) as a cofactor.

It is found in the endoplasmic reticulum membrane. It catalyses the reaction 2 (2E,6E)-farnesyl diphosphate + NADPH + H(+) = squalene + 2 diphosphate + NADP(+). The enzyme catalyses 2 (2E,6E)-farnesyl diphosphate + NADH + H(+) = squalene + 2 diphosphate + NAD(+). The catalysed reaction is presqualene diphosphate + NADH + H(+) = squalene + diphosphate + NAD(+). It carries out the reaction presqualene diphosphate + NADPH + H(+) = squalene + diphosphate + NADP(+). It catalyses the reaction 2 (2E,6E)-farnesyl diphosphate = presqualene diphosphate + diphosphate. Its pathway is terpene metabolism; lanosterol biosynthesis; lanosterol from farnesyl diphosphate: step 1/3. Catalyzes the condensation of 2 farnesyl pyrophosphate (FPP) moieties to form squalene. Proceeds in two distinct steps. In the first half-reaction, two molecules of FPP react to form the stable presqualene diphosphate intermediate (PSQPP), with concomitant release of a proton and a molecule of inorganic diphosphate. In the second half-reaction, PSQPP undergoes heterolysis, isomerization, and reduction with NADPH or NADH to form squalene. It is the first committed enzyme of the sterol biosynthesis pathway. This chain is Squalene synthase (Fdft1), found in Mus musculus (Mouse).